Consider the following 121-residue polypeptide: Large ribosomal subunit protein bL19 (121 aa).

This sequence belongs to the bacterial ribosomal protein bL19 family.

Its function is as follows. This protein is located at the 30S-50S ribosomal subunit interface and may play a role in the structure and function of the aminoacyl-tRNA binding site. This Mesomycoplasma hyopneumoniae (strain 232) (Mycoplasma hyopneumoniae) protein is Large ribosomal subunit protein bL19.